Reading from the N-terminus, the 268-residue chain is 4-hydroxy-tetrahydrodipicolinate reductase (268 aa).

Residue 7-12 (GANGRM) participates in NAD(+) binding. Arg-34 is a binding site for NADP(+). NAD(+) contacts are provided by residues 97–99 (GTT) and 121–124 (SENM). The active-site Proton donor/acceptor is His-155. Position 156 (His-156) interacts with (S)-2,3,4,5-tetrahydrodipicolinate. Lys-159 acts as the Proton donor in catalysis. 165 to 166 (GT) provides a ligand contact to (S)-2,3,4,5-tetrahydrodipicolinate.

The protein belongs to the DapB family.

Its subcellular location is the cytoplasm. It catalyses the reaction (S)-2,3,4,5-tetrahydrodipicolinate + NAD(+) + H2O = (2S,4S)-4-hydroxy-2,3,4,5-tetrahydrodipicolinate + NADH + H(+). The enzyme catalyses (S)-2,3,4,5-tetrahydrodipicolinate + NADP(+) + H2O = (2S,4S)-4-hydroxy-2,3,4,5-tetrahydrodipicolinate + NADPH + H(+). It functions in the pathway amino-acid biosynthesis; L-lysine biosynthesis via DAP pathway; (S)-tetrahydrodipicolinate from L-aspartate: step 4/4. Its function is as follows. Catalyzes the conversion of 4-hydroxy-tetrahydrodipicolinate (HTPA) to tetrahydrodipicolinate. This is 4-hydroxy-tetrahydrodipicolinate reductase from Bartonella bacilliformis (strain ATCC 35685 / KC583 / Herrer 020/F12,63).